A 434-amino-acid polypeptide reads, in one-letter code: Nicotinate phosphoribosyltransferase (434 aa).

Position 242 is a phosphohistidine; by autocatalysis (histidine 242).

This sequence belongs to the NAPRTase family. Transiently phosphorylated on a His residue during the reaction cycle. Phosphorylation strongly increases the affinity for substrates and increases the rate of nicotinate D-ribonucleotide production. Dephosphorylation regenerates the low-affinity form of the enzyme, leading to product release.

The enzyme catalyses nicotinate + 5-phospho-alpha-D-ribose 1-diphosphate + ATP + H2O = nicotinate beta-D-ribonucleotide + ADP + phosphate + diphosphate. Its pathway is cofactor biosynthesis; NAD(+) biosynthesis; nicotinate D-ribonucleotide from nicotinate: step 1/1. Functionally, catalyzes the synthesis of beta-nicotinate D-ribonucleotide from nicotinate and 5-phospho-D-ribose 1-phosphate at the expense of ATP. This is Nicotinate phosphoribosyltransferase from Allorhizobium ampelinum (strain ATCC BAA-846 / DSM 112012 / S4) (Agrobacterium vitis (strain S4)).